We begin with the raw amino-acid sequence, 184 residues long: Guanylate kinase (184 aa).

Residues 4–182 (MGLTVLSGPS…AAARLVALMI (179 aa)) enclose the Guanylate kinase-like domain. 11 to 18 (GPSGVGKD) contacts ATP.

This sequence belongs to the guanylate kinase family.

It localises to the cytoplasm. It carries out the reaction GMP + ATP = GDP + ADP. Essential for recycling GMP and indirectly, cGMP. This Frankia casuarinae (strain DSM 45818 / CECT 9043 / HFP020203 / CcI3) protein is Guanylate kinase.